A 252-amino-acid polypeptide reads, in one-letter code: Tabtoxin biosynthesis enzyme (252 aa).

A disordered region spans residues 1–23; the sequence is MYQRTATQLARKPASKQGETEMN.

May play a role in tabtoxin biosynthesis. This is Tabtoxin biosynthesis enzyme (tblA) from Pseudomonas amygdali pv. tabaci (Pseudomonas syringae pv. tabaci).